The primary structure comprises 890 residues: Wolframin (890 aa).

Met1 is subject to N-acetylmethionine. Over residues 1-20 the composition is skewed to pro residues; that stretch reads MNSGTPPPSPSGPPPPPAPQ. Positions 1–83 are disordered; that stretch reads MNSGTPPPSP…ETDRAGPMKA (83 aa). Residues 1–323 form an interaction with ATP6V1A region; sequence MNSGTPPPSP…MHWLSTIVPT (323 aa). Thr30 carries the phosphothreonine modification. Residue Ser32 is modified to Phosphoserine. Residues 50–67 show a composition bias toward low complexity; that stretch reads PSAGRSAGEAAAPEPRAP. A compositionally biased stretch (basic and acidic residues) spans 71–83; the sequence is SREETDRAGPMKA. Ser158 is modified (phosphoserine). Residues 208–227 form a disordered region; it reads VNEQDGGAQPGPVPKSLQKQ. The next 10 membrane-spanning stretches (helical) occupy residues 314-334, 340-360, 402-422, 427-447, 465-485, 496-516, 529-549, 563-583, 589-609, and 632-652; these read MHWL…FFFI, IDFF…VSMV, NHLE…FSFP, DCIP…TSYM, VAAG…FLKV, GHFI…LFYL, TYCY…SVVI, IGYF…ALMG, RWFL…CGVP, and SSMV…CWFY. Over 653-869 the chain is Lumenal; it reads VYRSEGMKVY…HVKIEQDWRS (217 aa). 2 N-linked (GlcNAc...) asparagine glycosylation sites follow: Asn663 and Asn748. A helical membrane pass occupies residues 870–890; it reads TVHGALKFAFDFFFFPFLSAA.

As to quaternary structure, interacts with ATP6V1A. Highly expressed in the developing lens.

Its subcellular location is the endoplasmic reticulum membrane. The protein localises to the cytoplasmic vesicle. The protein resides in the secretory vesicle. Functionally, participates in the regulation of cellular Ca(2+) homeostasis, at least partly, by modulating the filling state of the endoplasmic reticulum Ca(2+) store. Negatively regulates the ER stress response and positively regulates the stability of V-ATPase subunits ATP6V1A and ATP1B1 by preventing their degradation through an unknown proteasome-independent mechanism. This chain is Wolframin (Wfs1), found in Mus musculus (Mouse).